The sequence spans 443 residues: D-aminoacyl-tRNA deacylase (443 aa).

The protein belongs to the DtdA deacylase family. Monomer. It depends on Zn(2+) as a cofactor.

The enzyme catalyses a D-aminoacyl-tRNA + H2O = a tRNA + a D-alpha-amino acid + H(+). It catalyses the reaction glycyl-tRNA(Ala) + H2O = tRNA(Ala) + glycine + H(+). Its function is as follows. D-aminoacyl-tRNA deacylase with broad substrate specificity. By recycling D-aminoacyl-tRNA to D-amino acids and free tRNA molecules, this enzyme counteracts the toxicity associated with the formation of D-aminoacyl-tRNA entities in vivo. In Methanocorpusculum labreanum (strain ATCC 43576 / DSM 4855 / Z), this protein is D-aminoacyl-tRNA deacylase.